A 366-amino-acid polypeptide reads, in one-letter code: Alanine racemase (366 aa).

Lys40 functions as the Proton acceptor; specific for D-alanine in the catalytic mechanism. Lys40 carries the post-translational modification N6-(pyridoxal phosphate)lysine. Arg136 is a binding site for substrate. Residue Tyr263 is the Proton acceptor; specific for L-alanine of the active site. Met310 lines the substrate pocket.

The protein belongs to the alanine racemase family. The cofactor is pyridoxal 5'-phosphate.

The catalysed reaction is L-alanine = D-alanine. Its pathway is amino-acid biosynthesis; D-alanine biosynthesis; D-alanine from L-alanine: step 1/1. In terms of biological role, catalyzes the interconversion of L-alanine and D-alanine. May also act on other amino acids. This is Alanine racemase (alr) from Streptococcus agalactiae serotype Ia (strain ATCC 27591 / A909 / CDC SS700).